The chain runs to 130 residues: Small ribosomal subunit protein uS11c (130 aa).

This sequence belongs to the universal ribosomal protein uS11 family. In terms of assembly, part of the 30S ribosomal subunit.

The protein localises to the plastid. It is found in the chloroplast. The polypeptide is Small ribosomal subunit protein uS11c (Cycas taitungensis (Prince sago)).